The primary structure comprises 89 residues: Small ribosomal subunit protein uS17 (89 aa).

It belongs to the universal ribosomal protein uS17 family. Part of the 30S ribosomal subunit.

In terms of biological role, one of the primary rRNA binding proteins, it binds specifically to the 5'-end of 16S ribosomal RNA. The sequence is that of Small ribosomal subunit protein uS17 from Ralstonia pickettii (strain 12J).